A 420-amino-acid polypeptide reads, in one-letter code: Gamma-glutamyl phosphate reductase (420 aa).

This sequence belongs to the gamma-glutamyl phosphate reductase family.

The protein localises to the cytoplasm. The enzyme catalyses L-glutamate 5-semialdehyde + phosphate + NADP(+) = L-glutamyl 5-phosphate + NADPH + H(+). It functions in the pathway amino-acid biosynthesis; L-proline biosynthesis; L-glutamate 5-semialdehyde from L-glutamate: step 2/2. In terms of biological role, catalyzes the NADPH-dependent reduction of L-glutamate 5-phosphate into L-glutamate 5-semialdehyde and phosphate. The product spontaneously undergoes cyclization to form 1-pyrroline-5-carboxylate. The chain is Gamma-glutamyl phosphate reductase from Streptococcus gordonii (strain Challis / ATCC 35105 / BCRC 15272 / CH1 / DL1 / V288).